A 162-amino-acid chain; its full sequence is Cytochrome c-type biogenesis protein CcmE (162 aa).

The Cytoplasmic portion of the chain corresponds to 1 to 7; sequence MTRKQRR. A helical; Signal-anchor for type II membrane protein membrane pass occupies residues 8 to 28; sequence LTMIGGSLVVLAIAAALVLNA. At 29–162 the chain is on the periplasmic side; the sequence is LRDSIVFFST…EASGKQGVSQ (134 aa). Residues His-122 and Tyr-126 each contribute to the heme site. Residues 138–162 are disordered; sequence QGHWKDDYGPQAGAVEASGKQGVSQ.

This sequence belongs to the CcmE/CycJ family.

The protein resides in the cell inner membrane. In terms of biological role, heme chaperone required for the biogenesis of c-type cytochromes. Transiently binds heme delivered by CcmC and transfers the heme to apo-cytochromes in a process facilitated by CcmF and CcmH. The chain is Cytochrome c-type biogenesis protein CcmE from Nitrobacter hamburgensis (strain DSM 10229 / NCIMB 13809 / X14).